Consider the following 863-residue polypeptide: NACHT, LRR and PYD domains-containing protein 4B (863 aa).

One can recognise a Pyrin domain in the interval 1-93; that stretch reads MASLFSDFGF…TNRATGEIAA (93 aa). An NACHT domain is found at 143-466; that stretch reads KMVVLQGVAG…FYLLHSEMDH (324 aa). Position 149–156 (149–156) interacts with ATP; it reads GVAGIGKT. LRR repeat units follow at residues 618–643, 683–706, 717–740, 741–763, 765–782, 797–824, and 843–863; these read WHQICSVFLRNKDIKTLRIEDTIFNE, SYNLEELYLRGTFLSHSDVEMLCD, ILDLANCSLCEHSWDYLSDVLRQN, KSLRYLNISYNNLKDEGLKALCR, LTLPNSALHSLSLEACQL, YKCLRRINLAKNSLGFSGLFVLCKAMKD, and SQEFLLSEMERNKILSIENGV.

It belongs to the NLRP family.

Its function is as follows. May be involved in inflammation and recognition of cytosolic pathogen-associated molecular patterns (PAMPs) not intercepted by membrane-bound receptors. This Mus musculus (Mouse) protein is NACHT, LRR and PYD domains-containing protein 4B (Nlrp4b).